Consider the following 121-residue polypeptide: MSNQVLLDKLDRTTESLSQALAQLVKLSSIDRASADSDGDNDGTTDSITSVATNGVMMVHAHTTQLIRGVQDLLVITRAIRETWVLGQIPKKNGDEDAIDYEKCERLLEKAMDDFFGPVAL.

This sequence belongs to the Mediator complex subunit 22 family. In terms of assembly, component of the Mediator complex.

It localises to the nucleus. Its function is as follows. Component of the Mediator complex, a coactivator involved in the regulated transcription of nearly all RNA polymerase II-dependent genes. Mediator functions as a bridge to convey information from gene-specific regulatory proteins to the basal RNA polymerase II transcription machinery. Mediator is recruited to promoters by direct interactions with regulatory proteins and serves as a scaffold for the assembly of a functional preinitiation complex with RNA polymerase II and the general transcription factors. In Eremothecium gossypii (strain ATCC 10895 / CBS 109.51 / FGSC 9923 / NRRL Y-1056) (Yeast), this protein is Mediator of RNA polymerase II transcription subunit 22 (SRB6).